A 332-amino-acid chain; its full sequence is Adenine deaminase (332 aa).

3 residues coordinate Zn(2+): H14, H16, and H194. E197 serves as the catalytic Proton donor. D275 is a Zn(2+) binding site. D276 is a substrate binding site.

This sequence belongs to the metallo-dependent hydrolases superfamily. Adenosine and AMP deaminases family. Adenine deaminase type 2 subfamily. Zn(2+) serves as cofactor.

It carries out the reaction adenine + H2O + H(+) = hypoxanthine + NH4(+). Functionally, catalyzes the hydrolytic deamination of adenine to hypoxanthine. Plays an important role in the purine salvage pathway and in nitrogen catabolism. This is Adenine deaminase from Psychrobacter cryohalolentis (strain ATCC BAA-1226 / DSM 17306 / VKM B-2378 / K5).